The sequence spans 103 residues: Large ribosomal subunit protein bL21 (103 aa).

This sequence belongs to the bacterial ribosomal protein bL21 family. Part of the 50S ribosomal subunit. Contacts protein L20.

This protein binds to 23S rRNA in the presence of protein L20. In Albidiferax ferrireducens (strain ATCC BAA-621 / DSM 15236 / T118) (Rhodoferax ferrireducens), this protein is Large ribosomal subunit protein bL21.